The sequence spans 262 residues: Small ribosomal subunit protein eS1 (262 aa).

Residues 234–251 (DPKEDSGKNVKSLPESKE) show a composition bias toward basic and acidic residues. The tract at residues 234 to 262 (DPKEDSGKNVKSLPESKEATNILTAELKH) is disordered.

This sequence belongs to the eukaryotic ribosomal protein eS1 family. In terms of assembly, component of the small ribosomal subunit. Mature ribosomes consist of a small (40S) and a large (60S) subunit. The 40S subunit contains about 33 different proteins and 1 molecule of RNA (18S). The 60S subunit contains about 49 different proteins and 3 molecules of RNA (25S, 5.8S and 5S).

The protein localises to the cytoplasm. The polypeptide is Small ribosomal subunit protein eS1 (Plasmodium yoelii yoelii).